Here is a 292-residue protein sequence, read N- to C-terminus: Protease HtpX (292 aa).

2 consecutive transmembrane segments (helical) span residues 5–25 (IFLFLLTNVAVLMLAGVVMSV) and 34–54 (SGLLVMAAIFGFGGSFISLLL). His-140 provides a ligand contact to Zn(2+). Glu-141 is an active-site residue. His-144 provides a ligand contact to Zn(2+). The next 2 membrane-spanning stretches (helical) occupy residues 155-175 (LLQGVLNTFVIVLARVVGGII) and 193-213 (IIVFALEMVFGMFATMIAMWF). Position 218 (Glu-218) interacts with Zn(2+).

This sequence belongs to the peptidase M48B family. Zn(2+) is required as a cofactor.

It localises to the cell inner membrane. This is Protease HtpX from Xanthomonas oryzae pv. oryzae (strain PXO99A).